A 192-amino-acid chain; its full sequence is Erythropoietin (192 aa).

The first 26 residues, 1 to 26 (MGVRECPALLLLLSLLLPPLGLPALG), serve as a signal peptide directing secretion. Disulfide bonds link Cys-33/Cys-187 and Cys-55/Cys-59. Asn-50 is a glycosylation site (N-linked (GlcNAc...) asparagine). N-linked (GlcNAc...) asparagine glycosylation is found at Asn-64 and Asn-109.

The protein belongs to the EPO/TPO family.

It is found in the secreted. Functionally, hormone involved in the regulation of erythrocyte proliferation and differentiation and the maintenance of a physiological level of circulating erythrocyte mass. Binds to EPOR leading to EPOR dimerization and JAK2 activation thereby activating specific downstream effectors, including STAT1 and STAT3. The sequence is that of Erythropoietin (EPO) from Equus caballus (Horse).